The following is a 366-amino-acid chain: Glucose 1-dehydrogenase (366 aa).

Residue cysteine 39 coordinates Zn(2+). Residue threonine 41 participates in substrate binding. Positions 66 and 67 each coordinate Zn(2+). Asparagine 89 provides a ligand contact to substrate. Zn(2+)-binding residues include cysteine 93, cysteine 96, cysteine 99, and cysteine 107. Substrate-binding residues include glutamate 114, glutamine 150, and aspartate 154. Glutamine 150 contributes to the Zn(2+) binding site. Residues 189-192, 211-213, 277-279, 305-307, and lysine 354 each bind NADP(+); these read TGPI, NRR, FGF, and LVN. Asparagine 307 contributes to the substrate binding site.

This sequence belongs to the zinc-containing alcohol dehydrogenase family. Glucose 1-dehydrogenase subfamily. As to quaternary structure, homotetramer. Requires Zn(2+) as cofactor.

The enzyme catalyses D-glucose + NAD(+) = D-glucono-1,5-lactone + NADH + H(+). The catalysed reaction is D-glucose + NADP(+) = D-glucono-1,5-lactone + NADPH + H(+). It carries out the reaction D-galactose + NAD(+) = D-galactono-1,4-lactone + NADH + H(+). It catalyses the reaction D-galactose + NADP(+) = D-galactono-1,5-lactone + NADPH + H(+). The enzyme catalyses an aldopyranose + NAD(+) = aldono-1,5-lactone + NADH + H(+). The catalysed reaction is an aldopyranose + NADP(+) = aldono-1,5-lactone + NADPH + H(+). Inhibited by EDTA in vitro. Functionally, catalyzes the NAD(P)(+)-dependent oxidation of D-glucose to D-gluconate via gluconolactone. Displays broad substrate specificity since it is able to catalyze the oxidation of a number of alternative aldose sugars, such as D-galactose, D-xylose and L-arabinose, to the corresponding glyconate. Can utilize both NAD(+) and NADP(+) as electron acceptor. Physiologically, seems to be involved in the degradation of both glucose and galactose through a non-phosphorylative variant of the Entner-Doudoroff pathway. This chain is Glucose 1-dehydrogenase, found in Saccharolobus solfataricus (Sulfolobus solfataricus).